Here is a 134-residue protein sequence, read N- to C-terminus: Holo-[acyl-carrier-protein] synthase (134 aa).

Positions 8 and 57 each coordinate Mg(2+).

Belongs to the P-Pant transferase superfamily. AcpS family. Requires Mg(2+) as cofactor.

It localises to the cytoplasm. The enzyme catalyses apo-[ACP] + CoA = holo-[ACP] + adenosine 3',5'-bisphosphate + H(+). Transfers the 4'-phosphopantetheine moiety from coenzyme A to a Ser of acyl-carrier-protein. This chain is Holo-[acyl-carrier-protein] synthase, found in Rhizobium rhizogenes (strain K84 / ATCC BAA-868) (Agrobacterium radiobacter).